The sequence spans 287 residues: Protein TMEPAI (287 aa).

The Lumenal segment spans residues 1–40 (MHRLMGVNSTAAAAAGQPNVSCTCNCKRSLFQSMEITELE). The chain crosses the membrane as a helical span at residues 41 to 63 (FVQIIIIVVVMMVMVVVITCLLS). Topologically, residues 64–287 (HYKLSARSFI…EKDKQKGHPL (224 aa)) are cytoplasmic. The PPxY motif 1 signature appears at 158-161 (PPPY). The SMAD interaction motif (SIM) motif lies at 186–189 (PPNR). The PPxY motif 2 motif lies at 229–232 (PPTY). The disordered stretch occupies residues 239-258 (YPGSSFQHQQSSGPPSLLEG). Polar residues predominate over residues 242-252 (SSFQHQQSSGP).

This sequence belongs to the PMEPA1 family. As to quaternary structure, interacts with NEDD4 (via PPxY motifs). Interacts with AR. Interacts with LDLRAD4. Interacts (via the SMAD interaction motif) with SMAD2 and SMAD3. Highest expression in prostate. Also expressed in ovary.

Its subcellular location is the early endosome membrane. The protein localises to the golgi apparatus membrane. In terms of biological role, functions as a negative regulator of TGF-beta signaling and thereby probably plays a role in cell proliferation, differentiation, apoptosis, motility, extracellular matrix production and immunosuppression. In the canonical TGF-beta pathway, ZFYVE9/SARA recruits the intracellular signal transducer and transcriptional modulators SMAD2 and SMAD3 to the TGF-beta receptor. Phosphorylated by the receptor, SMAD2 and SMAD3 then form a heteromeric complex with SMAD4 that translocates to the nucleus to regulate transcription. Through interaction with SMAD2 and SMAD3, LDLRAD4 may compete with ZFYVE9 and SMAD4 and prevent propagation of the intracellular signal. Also involved in down-regulation of the androgen receptor (AR), enhancing ubiquitination and proteasome-mediated degradation of AR, probably by recruiting NEDD4. The chain is Protein TMEPAI (PMEPA1) from Homo sapiens (Human).